The chain runs to 294 residues: Flavin-dependent thymidylate synthase (294 aa).

The region spanning 27–250 (GFIRVIDYMG…PFTYEAFEEY (224 aa)) is the ThyX domain. FAD is bound by residues threonine 73, 96 to 98 (RHR), and glutamate 104. Residues 93–96 (QWIR), 104–108 (EYSAR), and arginine 189 contribute to the dUMP site. The ThyX motif signature appears at 96–106 (RHRTASVNEYS). FAD contacts are provided by residues 205-207 (NLH) and histidine 211. Residue arginine 216 participates in dUMP binding. The active-site Involved in ionization of N3 of dUMP, leading to its activation is arginine 216.

Belongs to the thymidylate synthase ThyX family. Homotetramer. FAD serves as cofactor.

It carries out the reaction dUMP + (6R)-5,10-methylene-5,6,7,8-tetrahydrofolate + NADPH + H(+) = dTMP + (6S)-5,6,7,8-tetrahydrofolate + NADP(+). It participates in pyrimidine metabolism; dTTP biosynthesis. Functionally, catalyzes the reductive methylation of 2'-deoxyuridine-5'-monophosphate (dUMP) to 2'-deoxythymidine-5'-monophosphate (dTMP) while utilizing 5,10-methylenetetrahydrofolate (mTHF) as the methyl donor, and NADPH and FADH(2) as the reductant. This chain is Flavin-dependent thymidylate synthase, found in Rickettsia typhi (strain ATCC VR-144 / Wilmington).